The following is a 124-amino-acid chain: Large ribosomal subunit protein eL33 (124 aa).

Ala-2 is modified (N-acetylalanine).

The protein belongs to the eukaryotic ribosomal protein eL33 family.

The sequence is that of Large ribosomal subunit protein eL33 from Caenorhabditis elegans.